Consider the following 980-residue polypeptide: MSSGCRSVGGSTWGNWRGDGGDLRQRRVLSPVCSAPAAGSWIGSQLGNVGNLLATPHPLGKPASSRVGTIVLACLLLFGSCVVRAVPTTPSPPTSTPTSMSTHSHGTVDPTLLPTETPDPLRLAVRESGILAEDGDFYTCPPPTGSTVVRIEPPRTCPKFDLGRNFTEGIAVIFKENIAPYKFRANVYYKDIVVTRVWKGYSHTSLSDRYNDRVPVSVEEIFGLIDSKGKCSSKAEYLRDNIMHHAYHDDEDEVELDLVPSKFATPGARAWQTTNDTTSYVGWMPWRHYTSTSVNCIVEEVEARSVYPYDSFALSTGDIVYASPFYGLRAAARIEHNSYAQERFRQVEGYRPRDLDSKLQAEEPVTKNFITTPHVTVSWNWTEKKVEACTLTKWKEVDELVRDEFRGSYRFTIRSISSTFISNTTQFKLESAPLTECVSKEAKEAIDSIYKKQYESTHVFSGDVEYYLARGGFLIAFRPMLSNELARLYLNELVRSNRTYDLKNLLNPNANNNNNTTRRRRSLLSVPEPQPTQDGVHREQILHRLHKRAVEATAGTDSSNVTAKQLELIKTTSSIEFAMLQFAYDHIQSHVNEMLSRIATAWCTLQNKERTLWNEMVKINPSAIVSATLDERVAARVLGDVIAITHCAKIEGNVYLQNSMRSMDSNTCYSRPPVTFTITKNANNRGSIEGQLGEENEIFTERKLIEPCALNQKRYFKFGKEYVYYENYTFVRKVPPTEIEVISTYVELNLTLLEDREFLPLEVYTRAELEDTGLLDYSEIQRRNQLHALRFYDIDSVVNVDNTAVIMQGIASFFKGLGKVGEAVGTLVLGAAGAVVSTVSGIASFLNNPFGGLAIGLLVIAGLVAAFFAYRYVMQIRSNPMKALYPITTKALKNKAKTSYGQNEEDDGSDFDEAKLEEAREMIKYMSMVSALEKQEKKAIKKNSGVGLIASNVSKLALRRRGPKYTRLQQNDTMENEKMV.

Residues 1 to 14 are compositionally biased toward polar residues; sequence MSSGCRSVGGSTWG. Disordered regions lie at residues 1–20 and 88–118; these read MSSG…RGDG and TTPS…TETP. Residues 1 to 86 form the signal peptide; sequence MSSGCRSVGG…LFGSCVVRAV (86 aa). The Virion surface portion of the chain corresponds to 87–849; that stretch reads PTTPSPPTST…SGIASFLNNP (763 aa). Over residues 96-118 the composition is skewed to low complexity; that stretch reads TPTSMSTHSHGTVDPTLLPTETP. 5 disulfide bridges follow: C140-C647, C157-C603, C231-C296, C389-C437, and C668-C708. A glycan (N-linked (GlcNAc...) asparagine; by host) is linked at N165. The segment at 197–203 is involved in fusion and/or binding to host membrane; sequence VWKGYSH. N275 carries an N-linked (GlcNAc...) asparagine; by host glycan. An involved in fusion and/or binding to host membrane region spans residues 282-290; that stretch reads GWMPWRHYT. N-linked (GlcNAc...) asparagine; by host glycosylation is found at N380, N423, N497, N514, N515, and N560. Positions 505–516 are enriched in low complexity; that stretch reads LLNPNANNNNNT. The disordered stretch occupies residues 505 to 535; that stretch reads LLNPNANNNNNTTRRRRSLLSVPEPQPTQDG. N727 and N749 each carry an N-linked (GlcNAc...) asparagine; by host glycan. Hydrophobic membrane proximal region stretches follow at residues 794-847 and 823-843; these read IDSV…SFLN and AVGT…SGIA. A helical membrane pass occupies residues 850 to 870; sequence FGGLAIGLLVIAGLVAAFFAY. Topologically, residues 871-980 are intravirion; it reads RYVMQIRSNP…NDTMENEKMV (110 aa). The Golgi targeting motif lies at 925–928; the sequence is YMSM. Residues 965 to 968 carry the Internalization motif motif; it reads YTRL.

This sequence belongs to the herpesviridae glycoprotein B family. As to quaternary structure, homotrimer; disulfide-linked. Binds to heparan sulfate proteoglycans. Interacts with gH/gL heterodimer. In terms of processing, a proteolytic cleavage by host furin generates two subunits that remain linked by disulfide bonds.

Its subcellular location is the virion membrane. It localises to the host cell membrane. The protein resides in the host endosome membrane. It is found in the host Golgi apparatus membrane. Envelope glycoprotein that forms spikes at the surface of virion envelope. Essential for the initial attachment to heparan sulfate moieties of the host cell surface proteoglycans. Involved in fusion of viral and cellular membranes leading to virus entry into the host cell. Following initial binding to its host receptors, membrane fusion is mediated by the fusion machinery composed at least of gB and the heterodimer gH/gL. May be involved in the fusion between the virion envelope and the outer nuclear membrane during virion egress. The protein is Envelope glycoprotein B of Equus caballus (Horse).